The sequence spans 478 residues: Trigger factor (478 aa).

Residues 162–243 (GDFVSIDLSA…VKSIKERELP (82 aa)) form the PPIase FKBP-type domain. Positions 424 to 478 (KDTDGNDIDTTEFFGPSGGAQAEAEGADEADADSDADSDTEADSDTEADEADEAK) are disordered. Over residues 448 to 478 (EGADEADADSDADSDTEADSDTEADEADEAK) the composition is skewed to acidic residues.

This sequence belongs to the FKBP-type PPIase family. Tig subfamily.

The protein resides in the cytoplasm. It catalyses the reaction [protein]-peptidylproline (omega=180) = [protein]-peptidylproline (omega=0). Functionally, involved in protein export. Acts as a chaperone by maintaining the newly synthesized protein in an open conformation. Functions as a peptidyl-prolyl cis-trans isomerase. This is Trigger factor from Mycobacterium sp. (strain KMS).